The following is a 97-amino-acid chain: Mapk-regulated corepressor-interacting protein 1 (97 aa).

Residues 1–26 show a composition bias toward polar residues; that stretch reads MTSSSTPRMHTYKRTSSPRSPTNTGE. Disordered regions lie at residues 1–27 and 54–97; these read MTSS…TGEL and QNHE…SKKS. Basic and acidic residues-rich tracts occupy residues 54-68 and 84-97; these read QNHE…EYVE and SDLK…SKKS. The PXDLS motif signature appears at 80–84; the sequence is PVDLS.

It belongs to the MCRIP family.

The protein resides in the nucleus. It localises to the cytoplasm. It is found in the stress granule. Functionally, may play a role in the regulation of the epithelial-mesenchymal transition. The polypeptide is Mapk-regulated corepressor-interacting protein 1 (mcrip1) (Danio rerio (Zebrafish)).